A 352-amino-acid polypeptide reads, in one-letter code: UDP-N-acetylglucosamine--N-acetylmuramyl-(pentapeptide) pyrophosphoryl-undecaprenol N-acetylglucosamine transferase (352 aa).

UDP-N-acetyl-alpha-D-glucosamine is bound by residues serine 195 and glutamine 287.

It belongs to the glycosyltransferase 28 family. MurG subfamily.

The protein localises to the cell membrane. It carries out the reaction Mur2Ac(oyl-L-Ala-gamma-D-Glu-L-Lys-D-Ala-D-Ala)-di-trans,octa-cis-undecaprenyl diphosphate + UDP-N-acetyl-alpha-D-glucosamine = beta-D-GlcNAc-(1-&gt;4)-Mur2Ac(oyl-L-Ala-gamma-D-Glu-L-Lys-D-Ala-D-Ala)-di-trans,octa-cis-undecaprenyl diphosphate + UDP + H(+). Its pathway is cell wall biogenesis; peptidoglycan biosynthesis. Its function is as follows. Cell wall formation. Catalyzes the transfer of a GlcNAc subunit on undecaprenyl-pyrophosphoryl-MurNAc-pentapeptide (lipid intermediate I) to form undecaprenyl-pyrophosphoryl-MurNAc-(pentapeptide)GlcNAc (lipid intermediate II). The protein is UDP-N-acetylglucosamine--N-acetylmuramyl-(pentapeptide) pyrophosphoryl-undecaprenol N-acetylglucosamine transferase of Streptococcus pneumoniae (strain 70585).